The following is an 83-amino-acid chain: Exodeoxyribonuclease 7 small subunit (83 aa).

It belongs to the XseB family. In terms of assembly, heterooligomer composed of large and small subunits.

It localises to the cytoplasm. The catalysed reaction is Exonucleolytic cleavage in either 5'- to 3'- or 3'- to 5'-direction to yield nucleoside 5'-phosphates.. Bidirectionally degrades single-stranded DNA into large acid-insoluble oligonucleotides, which are then degraded further into small acid-soluble oligonucleotides. The protein is Exodeoxyribonuclease 7 small subunit of Afipia carboxidovorans (strain ATCC 49405 / DSM 1227 / KCTC 32145 / OM5) (Oligotropha carboxidovorans).